The sequence spans 480 residues: MTKKISFIINGQVEIFPESDDLVQSINFGDNSVYLPILNNSHVKNIIDYNENNKLRLHNIVNFLYTVGQRWKNEEYSRRRTYIRDLKKYMGYSEAMAKLEANWISMILCSKGGLYDVVENELGSRHIMDEWLPQDESYIKAFPKGKSIHLLAGNVPLSGIMSILRAILTKNQCIIKTSSTDPFTANALALSFIDVDPNHPITRSLSVVYWPHQGDTSLAKEIMQHMDVIVAWGGEDAINWAVEHAPPYADVIKFGSKKSFCIIDNPVDLTSAATGAAHDICFYDQRACFSAQNIYYMGNQYEEFKLALIEKLNLYAHILPNAKKDFDEKAAYSLVQKESLFAGLKVEVDVHQRWMIIESNAGVEFNQPLGRCVYLHHVDNIEQVLPYVQKNKTQTISIFPWESAFKYRDALALRGAERIVEAGMNNIFRVGGSHDGMRPLQRLVTYISHERPSHYTAKDVAVEIEQTRFLEEDKFLVFVP.

Belongs to the LuxC family.

It catalyses the reaction a long-chain fatty aldehyde + NADP(+) + CoA = a long-chain fatty acyl-CoA + NADPH + H(+). It functions in the pathway lipid metabolism; fatty acid reduction for biolumincescence. In terms of biological role, luxC is the fatty acid reductase enzyme responsible for synthesis of the aldehyde substrate for the luminescent reaction catalyzed by luciferase. In Photorhabdus laumondii subsp. laumondii (strain DSM 15139 / CIP 105565 / TT01) (Photorhabdus luminescens subsp. laumondii), this protein is Long-chain acyl-protein thioester reductase (luxC).